Here is a 100-residue protein sequence, read N- to C-terminus: NADH-quinone oxidoreductase subunit K (100 aa).

3 helical membrane passes run 4–24 (LSHAFSLSIILFILGLIAIIV), 29–49 (LFILLGLEIMINAAASAFVIV), and 60–80 (IMYILVITLSASESAVSLALL).

The protein belongs to the complex I subunit 4L family. In terms of assembly, NDH-1 is composed of 13 different subunits. Subunits NuoA, H, J, K, L, M, N constitute the membrane sector of the complex.

It localises to the cell inner membrane. It carries out the reaction a quinone + NADH + 5 H(+)(in) = a quinol + NAD(+) + 4 H(+)(out). Its function is as follows. NDH-1 shuttles electrons from NADH, via FMN and iron-sulfur (Fe-S) centers, to quinones in the respiratory chain. The immediate electron acceptor for the enzyme in this species is believed to be ubiquinone. Couples the redox reaction to proton translocation (for every two electrons transferred, four hydrogen ions are translocated across the cytoplasmic membrane), and thus conserves the redox energy in a proton gradient. In Blochmanniella pennsylvanica (strain BPEN), this protein is NADH-quinone oxidoreductase subunit K.